The following is a 334-amino-acid chain: NH(3)-dependent NAD(+) synthetase (334 aa).

An ATP-binding site is contributed by 47 to 54 (GLSGGIDS). Mg(2+) is bound at residue aspartate 53. Arginine 183 is a binding site for deamido-NAD(+). ATP is bound at residue threonine 203. Residue glutamate 208 coordinates Mg(2+). Lysine 216 and aspartate 223 together coordinate deamido-NAD(+). Lysine 232 and threonine 254 together coordinate ATP.

Belongs to the NAD synthetase family. Homodimer.

The enzyme catalyses deamido-NAD(+) + NH4(+) + ATP = AMP + diphosphate + NAD(+) + H(+). The protein operates within cofactor biosynthesis; NAD(+) biosynthesis; NAD(+) from deamido-NAD(+) (ammonia route): step 1/1. Functionally, catalyzes the ATP-dependent amidation of deamido-NAD to form NAD. Uses ammonia as a nitrogen source. In Rhizobium meliloti (strain 1021) (Ensifer meliloti), this protein is NH(3)-dependent NAD(+) synthetase.